A 514-amino-acid chain; its full sequence is Probable E3 ubiquitin-protein ligase ARI10 (514 aa).

The span at 1-18 (MDYSDDDMIDNESGEENN) shows a compositional bias: acidic residues. Residues 1–26 (MDYSDDDMIDNESGEENNSDGGGNES) form a disordered region. The TRIAD supradomain stretch occupies residues 117 to 322 (VDIQCGICFE…SDHYACNNYV (206 aa)). Zn(2+)-binding residues include C121, C124, C138, H140, C143, C146, C166, C171, C210, C215, C231, C233, C238, C241, H246, C251, C278, and C281. An RING-type 1 zinc finger spans residues 121 to 171 (CGICFESYTRKEIASVSCGHPYCKTCWTGYITTKIEDGPGCLRVKCPEPSC). Residues 190 to 251 (DKYYRYFLRS…SEDAHSPVDC (62 aa)) form an IBR-type zinc finger. The RING-type 2; atypical zinc-finger motif lies at 278–308 (CPKCKRPIEKSHGCNHMTCSASCGHRFCWIC). C291 is an active-site residue. Residues C296, C300, C305, C308, H315, and C318 each coordinate Zn(2+).

Belongs to the RBR family. Ariadne subfamily. Zn(2+) serves as cofactor.

The enzyme catalyses [E2 ubiquitin-conjugating enzyme]-S-ubiquitinyl-L-cysteine + [acceptor protein]-L-lysine = [E2 ubiquitin-conjugating enzyme]-L-cysteine + [acceptor protein]-N(6)-ubiquitinyl-L-lysine.. Its pathway is protein modification; protein ubiquitination. Functionally, might act as an E3 ubiquitin-protein ligase, or as part of E3 complex, which accepts ubiquitin from specific E2 ubiquitin-conjugating enzymes and then transfers it to substrates. This Arabidopsis thaliana (Mouse-ear cress) protein is Probable E3 ubiquitin-protein ligase ARI10 (ARI10).